The following is a 249-amino-acid chain: Major phosphate-irrepressible acid phosphatase (249 aa).

The N-terminal stretch at 1–20 (MKKNIIAGCLFSLFSLSALA) is a signal peptide.

It belongs to the class A bacterial acid phosphatase family. As to quaternary structure, homotetramer.

It is found in the periplasm. It catalyses the reaction a phosphate monoester + H2O = an alcohol + phosphate. This Morganella morganii (Proteus morganii) protein is Major phosphate-irrepressible acid phosphatase (phoC).